A 1052-amino-acid polypeptide reads, in one-letter code: uncharacterized protein (1052 aa).

The protein belongs to the IIV-6 050L family.

This is an uncharacterized protein from Invertebrate iridescent virus 6 (IIV-6).